Reading from the N-terminus, the 95-residue chain is MAQEEKERFVIPDENGTEHLFDELFRFTVDETEKSYMVLVPVGEEEDDEEEVEVFAFRYEEQQNEDNDISFYPVETDEEWDMIEEMLNTFSEEEE.

This sequence belongs to the UPF0473 family.

The chain is UPF0473 protein ABC1595 from Shouchella clausii (strain KSM-K16) (Alkalihalobacillus clausii).